Here is a 2109-residue protein sequence, read N- to C-terminus: General transcription factor 3C polypeptide 1 (2109 aa).

The interval 467–521 (LPEGEDTFLSESDSEEERSSSKRRGRGSQKDTRASANLRPKTQPHHSTPTKGGWK) is disordered. Residues 469 to 482 (EGEDTFLSESDSEE) are compositionally biased toward acidic residues. Residue K529 forms a Glycyl lysine isopeptide (Lys-Gly) (interchain with G-Cter in SUMO2) linkage. The segment at 586–609 (MENPKESSSSLKTGRHSSGQDKPH) is disordered. S667 is subject to Phosphoserine. Residues 718–727 (STANRVKTSQ) are compositionally biased toward polar residues. Positions 718–775 (STANRVKTSQPPVPQGEAEEDSQGKEGPSGSGDSQLSASSRSESGRMKKSDNKMGITP) are disordered. Position 739 is a phosphoserine (S739). A compositionally biased stretch (low complexity) spans 748–759 (SGDSQLSASSRS). Residues 760–769 (ESGRMKKSDN) are compositionally biased toward basic and acidic residues. Glycyl lysine isopeptide (Lys-Gly) (interchain with G-Cter in SUMO2) cross-links involve residues K770 and K833. Disordered regions lie at residues 836-857 (SGRAGVRPSSSGSAWEACSEAP) and 1059-1082 (RKNSSTDQGSDEEGSLQKEQESAM). Phosphoserine is present on residues S1062 and S1068. A compositionally biased stretch (basic and acidic residues) spans 1073–1082 (SLQKEQESAM). A Glycyl lysine isopeptide (Lys-Gly) (interchain with G-Cter in SUMO2) cross-link involves residue K1142. The tract at residues 1202-1241 (SLDRNRRVRGGKSQKRKRLKKDPGKKIKRKKKGEFPGEKS) is disordered. Basic residues predominate over residues 1207-1221 (RRVRGGKSQKRKRLK). Residues S1253 and S1611 each carry the phosphoserine modification. The interval 1608 to 1631 (KDGSLEDDEDEEDDLDEGVGGKRR) is disordered. The segment covering 1612-1624 (LEDDEDEEDDLDE) has biased composition (acidic residues). 2 positions are modified to phosphoserine: S1632 and S1653. Positions 1823-1833 (EDADIQREDPQ) are enriched in basic and acidic residues. Residues 1823-1961 (EDADIQREDP…GSEDPRGFTE (139 aa)) form a disordered region. Residues 1838 to 1848 (EGSSSEDSPPE) are compositionally biased toward low complexity. Phosphoserine occurs at positions 1856, 1865, 1868, 1896, and 1911. A compositionally biased stretch (low complexity) spans 1916–1926 (LEDTAAAGAAQ). Residues 1937-1947 (SPGQEQLSGQA) show a composition bias toward polar residues. S1969 is subject to Phosphoserine.

This sequence belongs to the TFIIIC subunit 1 family. In terms of assembly, part of the TFIIIC subcomplex TFIIIC2, consisting of six subunits, GTF3C1, GTF3C2, GTF3C3, GTF3C4, GTF3C5 and GTF3C6. Interacts with IGHMBP2. Interacts with MAF1.

It is found in the nucleus. In terms of biological role, required for RNA polymerase III-mediated transcription. Component of TFIIIC that initiates transcription complex assembly on tRNA and is required for transcription of 5S rRNA and other stable nuclear and cytoplasmic RNAs. Binds to the box B promoter element. This chain is General transcription factor 3C polypeptide 1 (GTF3C1), found in Homo sapiens (Human).